Here is a 203-residue protein sequence, read N- to C-terminus: Glycerol-3-phosphate acyltransferase (203 aa).

6 consecutive transmembrane segments (helical) span residues 5 to 25 (IASI…FSLL), 50 to 70 (TCGF…GALP), 72 to 92 (IAAQ…TAAM), 115 to 135 (VVLT…AVTF), 140 to 160 (ISAV…AVLL), and 162 to 182 (LGML…AIVF).

It belongs to the PlsY family. In terms of assembly, probably interacts with PlsX.

The protein localises to the cell membrane. It carries out the reaction an acyl phosphate + sn-glycerol 3-phosphate = a 1-acyl-sn-glycero-3-phosphate + phosphate. The protein operates within lipid metabolism; phospholipid metabolism. Functionally, catalyzes the transfer of an acyl group from acyl-phosphate (acyl-PO(4)) to glycerol-3-phosphate (G3P) to form lysophosphatidic acid (LPA). This enzyme utilizes acyl-phosphate as fatty acyl donor, but not acyl-CoA or acyl-ACP. The chain is Glycerol-3-phosphate acyltransferase from Roseiflexus sp. (strain RS-1).